The sequence spans 457 residues: tRNA (guanine(37)-N(1))-methyltransferase (457 aa).

S-adenosyl-L-methionine is bound by residues histidine 225, 263–264, 291–292, and asparagine 358; these read DL and DG.

Belongs to the class I-like SAM-binding methyltransferase superfamily. TRM5/TYW2 family. As to quaternary structure, monomer.

It localises to the mitochondrion matrix. The protein localises to the nucleus. Its subcellular location is the cytoplasm. The enzyme catalyses guanosine(37) in tRNA + S-adenosyl-L-methionine = N(1)-methylguanosine(37) in tRNA + S-adenosyl-L-homocysteine + H(+). Its function is as follows. Specifically methylates the N1 position of guanosine-37 in various cytoplasmic and mitochondrial tRNAs. Methylation is not dependent on the nature of the nucleoside 5' of the target nucleoside. This is the first step in the biosynthesis of wybutosine (yW), a modified base adjacent to the anticodon of tRNAs and required for accurate decoding. The protein is tRNA (guanine(37)-N(1))-methyltransferase of Coprinopsis cinerea (strain Okayama-7 / 130 / ATCC MYA-4618 / FGSC 9003) (Inky cap fungus).